The primary structure comprises 496 residues: MGHQEEPPRICKTPSGHEQGEGPAEKTSKPSTEEVGWDGPTDPARPVNWSRKKKWWNMGIISYLTFLTPLTSSIVAPAQGLVMKDFHSTNRTLASFVVSIYLVGFAVGPLFLAPLSEIYGRLRVYQVGTFIFTIWNIAGAVAPNVGALLVFRLFAGISGSGPVTLGAGSVADMFARQERGVAMSLYGLGPLLGPVIGPIAGGYLSQAQGWRWVFWLLAIVSGVAVILVLFVLSESYEPVLLRQKAKRIRRENSSVEVNAGQALKLDSRKVFIQAITRPTKLLFLTPNVALFSLYTGVVFGYLYLLFTTVTEVYETTYHFSQGATGLVYIGIGVGALIGISCFGALSDKIQNILIARNNGQAEPEFRLPPLIPGSFLIPIGLFWYGWSTQMHIHWIMPIIGLGWVGCGMIATLLPIQAYLVDAFGEYAASAIAANTVVRSIVGAFLPLAGPSMYATLGLGWGNSLLGFVALGLLPVPVVFYFYGKKIRMNSRYQVSV.

Positions 1 to 45 (MGHQEEPPRICKTPSGHEQGEGPAEKTSKPSTEEVGWDGPTDPAR) are disordered. The segment covering 18 to 32 (EQGEGPAEKTSKPST) has biased composition (basic and acidic residues). N-linked (GlcNAc...) asparagine glycosylation is present at Asn-48. A helical transmembrane segment spans residues 58 to 78 (MGIISYLTFLTPLTSSIVAPA). N-linked (GlcNAc...) asparagine glycosylation occurs at Asn-90. 5 helical membrane-spanning segments follow: residues 93–113 (LASF…LFLA), 130–150 (FIFT…ALLV), 154–174 (FAGI…ADMF), 180–200 (GVAM…GPIA), and 212–232 (WVFW…LFVL). Asn-252 carries N-linked (GlcNAc...) asparagine glycosylation. The next 6 membrane-spanning stretches (helical) occupy residues 288-308 (VALF…LFTT), 325-345 (GLVY…FGAL), 367-387 (LPPL…YGWS), 395-415 (IMPI…LLPI), 427-449 (AASA…PLAG), and 463-483 (SLLG…YFYG).

This sequence belongs to the major facilitator superfamily.

It is found in the membrane. Functionally, MFS transporter; part of the gene cluster that mediates the biosynthesis of the fungal neurotoxin cyclopiazonic acid (CPA), a nanomolar inhibitor of Ca(2+)-ATPase with a unique pentacyclic indole tetramic acid scaffold. The polypeptide is MFS transporter cpaT (Aspergillus oryzae (Yellow koji mold)).